Consider the following 161-residue polypeptide: Large ribosomal subunit protein uL15 (161 aa).

Positions 1–43 are disordered; the sequence is MKLSEIADNVGSRKKRMRIGRGIGSGKGKTGGRGGKGQTARSG. Residues 21-37 show a composition bias toward gly residues; the sequence is RGIGSGKGKTGGRGGKG.

In terms of assembly, part of the 50S ribosomal subunit.

In terms of biological role, binds to the 23S rRNA. This chain is Large ribosomal subunit protein uL15, found in Rhodopseudomonas palustris (strain ATCC BAA-98 / CGA009).